An 806-amino-acid polypeptide reads, in one-letter code: Glycerol-3-phosphate acyltransferase (806 aa).

The HXXXXD motif motif lies at 305-310 (CHRSHM).

It belongs to the GPAT/DAPAT family.

The protein resides in the cell inner membrane. The catalysed reaction is sn-glycerol 3-phosphate + an acyl-CoA = a 1-acyl-sn-glycero-3-phosphate + CoA. It participates in phospholipid metabolism; CDP-diacylglycerol biosynthesis; CDP-diacylglycerol from sn-glycerol 3-phosphate: step 1/3. This Salmonella paratyphi A (strain ATCC 9150 / SARB42) protein is Glycerol-3-phosphate acyltransferase.